A 103-amino-acid polypeptide reads, in one-letter code: Matrix Gla protein (103 aa).

The signal sequence occupies residues 1–19 (MKSLLLLSVLAALAVAALC). At E21 the chain carries 4-carboxyglutamate. Phosphoserine is present on residues S22, S25, and S28. Residues 51 to 97 (RAKAQERIRELNKPPYELNREACDDYKLCERYAMVYGYNAAYNRYFR) form the Gla domain. Residues E56, E60, E67, and E71 each carry the 4-carboxyglutamate modification. A disulfide bridge connects residues C73 and C79.

The protein belongs to the osteocalcin/matrix Gla protein family. Requires vitamin K-dependent gamma-carboxylation for its function.

The protein localises to the secreted. Associates with the organic matrix of bone and cartilage. Thought to act as an inhibitor of bone formation. The chain is Matrix Gla protein (MGP) from Sus scrofa (Pig).